A 201-amino-acid chain; its full sequence is Recombination protein RecR (201 aa).

The segment at 57–72 (CADCRTFTEQPVCTIC) adopts a C4-type zinc-finger fold. The Toprim domain occupies 81 to 176 (GQICVVESPA…MASRIAHGVP (96 aa)).

The protein belongs to the RecR family.

May play a role in DNA repair. It seems to be involved in an RecBC-independent recombinational process of DNA repair. It may act with RecF and RecO. This Sodalis glossinidius (strain morsitans) protein is Recombination protein RecR.